Here is a 357-residue protein sequence, read N- to C-terminus: MRVSDFTFELPDELIARYPQEQRSGCRLLSLDGPTGARQHGVFTDIVDKLNPGDLLVFNNTRVIPARLFGRKASGGKVEVLVERVLDRTRVLAHVRASKAPKPGAGLLLGDNEDIRATMLARHDALFELGFDDPRDVLTILNAAGHMPLPPYIDRPDEEADRELYQTVYSSRPGAVAAPTAGLHFDQPLLDRLRDKGVEMAFVTLHVGAGTFQPVRVESIEDHVMHSEYAEVPQEVVDAVLACKARGNRVIAVGTTSVRSLESAAAANKQALIAPFFDDTQIFIYPGYHYQVIDALITNFHLPESTLIMLVSAFAGYRHTLDAYRDAVVQQYRFFSYGDAMYITRNPQAEQEQVVSA.

Belongs to the QueA family. As to quaternary structure, monomer.

It localises to the cytoplasm. The enzyme catalyses 7-aminomethyl-7-carbaguanosine(34) in tRNA + S-adenosyl-L-methionine = epoxyqueuosine(34) in tRNA + adenine + L-methionine + 2 H(+). Its pathway is tRNA modification; tRNA-queuosine biosynthesis. In terms of biological role, transfers and isomerizes the ribose moiety from AdoMet to the 7-aminomethyl group of 7-deazaguanine (preQ1-tRNA) to give epoxyqueuosine (oQ-tRNA). The protein is S-adenosylmethionine:tRNA ribosyltransferase-isomerase of Edwardsiella ictaluri (strain 93-146).